A 96-amino-acid chain; its full sequence is Co-chaperonin GroES (96 aa).

Belongs to the GroES chaperonin family. As to quaternary structure, heptamer of 7 subunits arranged in a ring. Interacts with the chaperonin GroEL.

It localises to the cytoplasm. Functionally, together with the chaperonin GroEL, plays an essential role in assisting protein folding. The GroEL-GroES system forms a nano-cage that allows encapsulation of the non-native substrate proteins and provides a physical environment optimized to promote and accelerate protein folding. GroES binds to the apical surface of the GroEL ring, thereby capping the opening of the GroEL channel. The sequence is that of Co-chaperonin GroES from Albidiferax ferrireducens (strain ATCC BAA-621 / DSM 15236 / T118) (Rhodoferax ferrireducens).